The following is a 158-amino-acid chain: C-type lectin galactose-binding isoform (158 aa).

A signal peptide spans 1–23 (MGRFLLVTLSLLVMAFFLNGANS). Intrachain disulfides connect C26-C37, C54-C154, and C129-C146. In terms of domain architecture, C-type lectin spans 33–155 (RNGFCYKVFN…CTALRPFLCQ (123 aa)). Q119, D121, and E127 together coordinate Ca(2+). The short motif at 119 to 121 (QPD) is the Galactose-binding element. A glycan (N-linked (GlcNAc...) asparagine) is linked at N134. The Ca(2+) site is built by N142 and D143.

It belongs to the true venom lectin family. In terms of assembly, dimer. Probably disulfide-linked homodimer. As to expression, expressed by the venom gland.

Its subcellular location is the secreted. In terms of biological role, galactose-binding lectin that binds to and agglutinates erythrocytes in a calcium-dependent manner. In Pseudechis australis (Mulga snake), this protein is C-type lectin galactose-binding isoform.